We begin with the raw amino-acid sequence, 371 residues long: Chaperone protein DnaJ (371 aa).

The J domain maps to 6–71 (DYYEILGVEK…QKRAQYDRFG (66 aa)). A disordered region spans residues 104-123 (GGMGGQQRQRRNRNEPRRGS). The segment at 139–217 (GIEKEIEFDT…CKGKGRVAEH (79 aa)) adopts a CR-type zinc-finger fold. Zn(2+) is bound by residues cysteine 152, cysteine 155, cysteine 169, cysteine 172, cysteine 191, cysteine 194, cysteine 205, and cysteine 208. 4 CXXCXGXG motif repeats span residues 152–159 (CDECKGTG), 169–176 (CGTCGGSG), 191–198 (CPTCHGQG), and 205–212 (CKPCKGKG).

Belongs to the DnaJ family. Homodimer. It depends on Zn(2+) as a cofactor.

It localises to the cytoplasm. Its function is as follows. Participates actively in the response to hyperosmotic and heat shock by preventing the aggregation of stress-denatured proteins and by disaggregating proteins, also in an autonomous, DnaK-independent fashion. Unfolded proteins bind initially to DnaJ; upon interaction with the DnaJ-bound protein, DnaK hydrolyzes its bound ATP, resulting in the formation of a stable complex. GrpE releases ADP from DnaK; ATP binding to DnaK triggers the release of the substrate protein, thus completing the reaction cycle. Several rounds of ATP-dependent interactions between DnaJ, DnaK and GrpE are required for fully efficient folding. Also involved, together with DnaK and GrpE, in the DNA replication of plasmids through activation of initiation proteins. This is Chaperone protein DnaJ from Bdellovibrio bacteriovorus (strain ATCC 15356 / DSM 50701 / NCIMB 9529 / HD100).